The sequence spans 332 residues: Protein phosphatase PTC7 homolog fig (332 aa).

Residues 70 to 325 (KPCSPRERAN…DDITLILASV (256 aa)) enclose the PPM-type phosphatase domain. Mn(2+) is bound by residues Asp-102, Gly-103, and Asp-247.

This sequence belongs to the PP2C family. Mg(2+) serves as cofactor. Mn(2+) is required as a cofactor.

It carries out the reaction O-phospho-L-seryl-[protein] + H2O = L-seryl-[protein] + phosphate. The enzyme catalyses O-phospho-L-threonyl-[protein] + H2O = L-threonyl-[protein] + phosphate. This chain is Protein phosphatase PTC7 homolog fig, found in Drosophila ananassae (Fruit fly).